The primary structure comprises 200 residues: Endochitinase (200 aa).

Residue E58 is the Proton donor of the active site.

This sequence belongs to the glycosyl hydrolase 19 family. Chitinase class I subfamily.

The catalysed reaction is Random endo-hydrolysis of N-acetyl-beta-D-glucosaminide (1-&gt;4)-beta-linkages in chitin and chitodextrins.. In terms of biological role, this protein functions as a defense against chitin-containing fungal pathogens. The polypeptide is Endochitinase (Avena sativa (Oat)).